A 137-amino-acid chain; its full sequence is Putative transcription elongation factor S-II-like protein 055R (137 aa).

The segment at 85-136 (DFITCPYEVSEGVLRCGKCDCTKILWFSKQTRSMDEPTTIFASCSNCKTRWT) adopts a TFIIS-type zinc-finger fold. 4 residues coordinate Zn(2+): cysteine 89, cysteine 103, cysteine 128, and cysteine 131.

The protein belongs to the IIV-6 349L family.

This Aedes vexans (Inland floodwater mosquito) protein is Putative transcription elongation factor S-II-like protein 055R.